A 172-amino-acid chain; its full sequence is Translation initiation factor IF-3 (172 aa).

It belongs to the IF-3 family. Monomer.

The protein resides in the cytoplasm. Its function is as follows. IF-3 binds to the 30S ribosomal subunit and shifts the equilibrium between 70S ribosomes and their 50S and 30S subunits in favor of the free subunits, thus enhancing the availability of 30S subunits on which protein synthesis initiation begins. This is Translation initiation factor IF-3 from Campylobacter jejuni subsp. jejuni serotype O:6 (strain 81116 / NCTC 11828).